A 143-amino-acid polypeptide reads, in one-letter code: Anti-sigma F factor (143 aa).

This sequence belongs to the anti-sigma-factor family.

It carries out the reaction L-seryl-[protein] + ATP = O-phospho-L-seryl-[protein] + ADP + H(+). It catalyses the reaction L-threonyl-[protein] + ATP = O-phospho-L-threonyl-[protein] + ADP + H(+). Functionally, binds to sigma F and blocks its ability to form an RNA polymerase holoenzyme (E-sigma F). Phosphorylates SpoIIAA on a serine residue. This phosphorylation may enable SpoIIAA to act as an anti-anti-sigma factor that counteracts SpoIIAB and thus releases sigma F from inhibition. This is Anti-sigma F factor from Clostridium beijerinckii (strain ATCC 51743 / NCIMB 8052) (Clostridium acetobutylicum).